Consider the following 294-residue polypeptide: Ribosomal RNA small subunit methyltransferase A (294 aa).

S-adenosyl-L-methionine contacts are provided by asparagine 29, valine 31, glycine 56, glutamate 77, aspartate 107, and asparagine 126.

Belongs to the class I-like SAM-binding methyltransferase superfamily. rRNA adenine N(6)-methyltransferase family. RsmA subfamily.

The protein resides in the cytoplasm. The catalysed reaction is adenosine(1518)/adenosine(1519) in 16S rRNA + 4 S-adenosyl-L-methionine = N(6)-dimethyladenosine(1518)/N(6)-dimethyladenosine(1519) in 16S rRNA + 4 S-adenosyl-L-homocysteine + 4 H(+). In terms of biological role, specifically dimethylates two adjacent adenosines (A1518 and A1519) in the loop of a conserved hairpin near the 3'-end of 16S rRNA in the 30S particle. May play a critical role in biogenesis of 30S subunits. The polypeptide is Ribosomal RNA small subunit methyltransferase A (Mycobacterium sp. (strain MCS)).